The sequence spans 274 residues: Formamidopyrimidine-DNA glycosylase (274 aa).

The active-site Schiff-base intermediate with DNA is the P2. The active-site Proton donor is the E3. K58 serves as the catalytic Proton donor; for beta-elimination activity. DNA-binding residues include H91, R110, and K152. The FPG-type zinc-finger motif lies at 237–271 (KVYGRKNLPCLVCENKIETVVIAGRHSAFCPHCQP). Residue R261 is the Proton donor; for delta-elimination activity of the active site.

This sequence belongs to the FPG family. Monomer. The cofactor is Zn(2+).

The enzyme catalyses Hydrolysis of DNA containing ring-opened 7-methylguanine residues, releasing 2,6-diamino-4-hydroxy-5-(N-methyl)formamidopyrimidine.. It catalyses the reaction 2'-deoxyribonucleotide-(2'-deoxyribose 5'-phosphate)-2'-deoxyribonucleotide-DNA = a 3'-end 2'-deoxyribonucleotide-(2,3-dehydro-2,3-deoxyribose 5'-phosphate)-DNA + a 5'-end 5'-phospho-2'-deoxyribonucleoside-DNA + H(+). In terms of biological role, involved in base excision repair of DNA damaged by oxidation or by mutagenic agents. Acts as a DNA glycosylase that recognizes and removes damaged bases. Has a preference for oxidized purines, such as 7,8-dihydro-8-oxoguanine (8-oxoG). Has AP (apurinic/apyrimidinic) lyase activity and introduces nicks in the DNA strand. Cleaves the DNA backbone by beta-delta elimination to generate a single-strand break at the site of the removed base with both 3'- and 5'-phosphates. The protein is Formamidopyrimidine-DNA glycosylase of Legionella pneumophila (strain Lens).